Reading from the N-terminus, the 308-residue chain is MKASKQFRHQRRIVDGVLLLDKPRGLTSNAALQTARRLLNAAKAGHTGTLDPMATGLLPLTLGEATKFSQMLLDADKAYEATVRLGIETDTGDAEGAAIATAPVHVTDDSIRQALAALTGEIEQVPPMYSALKRDGKPLYEYARAGIEVERAARPVTIHSLELLGVEGDSLRIRVDCSKGTYVRTLAIDLGRLLGCGGHLTELRRTRIGPFNVDEAVTLTALEALPAESRVGLLAPVDALVGHLPRIELDAFQAGLLLQGRVLAAPCGAAGLVRIYGEGRYLGLGECDGNGTLSPKRLVSTVATAQQS.

Catalysis depends on aspartate 51, which acts as the Nucleophile.

It belongs to the pseudouridine synthase TruB family. Type 1 subfamily.

The enzyme catalyses uridine(55) in tRNA = pseudouridine(55) in tRNA. Responsible for synthesis of pseudouridine from uracil-55 in the psi GC loop of transfer RNAs. The chain is tRNA pseudouridine synthase B from Aromatoleum aromaticum (strain DSM 19018 / LMG 30748 / EbN1) (Azoarcus sp. (strain EbN1)).